An 833-amino-acid polypeptide reads, in one-letter code: ERAD-associated E3 ubiquitin-protein ligase component HRD3 (833 aa).

Residues 1-19 (MLLSTYLNWASVLLTIAGA) form the signal peptide. 3 N-linked (GlcNAc...) asparagine glycosylation sites follow: asparagine 105, asparagine 127, and asparagine 146. One copy of the Sel1-like 1 repeat lies at 107–143 (TEAMYKLSQINLWGQYGYPHNKSVAFQYLQKFNDMTS). Sel1-like repeat units lie at residues 147–184 (SSAL…RLGD) and 185–220 (LKAK…EEIK). Asparagine 424 and asparagine 607 each carry an N-linked (GlcNAc...) asparagine glycan. Sel1-like repeat units follow at residues 592–623 (TDAA…LKFS) and 624–659 (AQAL…EHNQ). Asparagine 688 and asparagine 713 each carry an N-linked (GlcNAc...) asparagine glycan. The chain crosses the membrane as a helical span at residues 752 to 772 (LLTMVCVLIIFAISMFFRTVA). The segment at 789-818 (GNALGEEGNPENENEEDDENDDEGRARARN) is disordered. Over residues 796-810 (GNPENENEEDDENDD) the composition is skewed to acidic residues.

It belongs to the sel-1 family. As to quaternary structure, interacts with HRD1.

The protein localises to the endoplasmic reticulum membrane. Component of the endoplasmic reticulum quality control (ERQC) system involved in ubiquitin-dependent degradation of missfolded endoplasmic reticulum proteins. Component of the HRD1 ubiquitin ligase complex, which is part of the ERAD-L and ERAD-M pathways responsible for the rapid degradation of soluble lumenal and membrane proteins with misfolded lumenal domains (ERAD-L), or ER-membrane proteins with misfolded transmembrane domains (ERAD-M). ERAD-L substrates are ubiquitinated through HRD1 in conjunction with the E2 ubiquitin-conjugating enzymes UBC1 and UBC7-CUE1. Ubiquitinated substrates are then removed to the cytosol via the action of the UFD1-NPL4-CDC48/p97 (UNC) AAA ATPase complex and targeted to the proteasome. ERAD-M substrates are processed by the same HRD1-HRD3 core complex, but only a subset of the other components is required for ERAD-M. Stabilizes the HRD1 ubiquitin-protein ligase. Also has a function in recruiting misfolded protein substrates. The chain is ERAD-associated E3 ubiquitin-protein ligase component HRD3 (HRD3) from Candida glabrata (strain ATCC 2001 / BCRC 20586 / JCM 3761 / NBRC 0622 / NRRL Y-65 / CBS 138) (Yeast).